The sequence spans 589 residues: Sulfite reductase [NADPH] hemoprotein beta-component (589 aa).

The [4Fe-4S] cluster site is built by C443, C449, C488, and C492. C492 lines the siroheme pocket.

This sequence belongs to the nitrite and sulfite reductase 4Fe-4S domain family. Alpha(8)-beta(8). The alpha component is a flavoprotein, the beta component is a hemoprotein. Siroheme serves as cofactor. [4Fe-4S] cluster is required as a cofactor.

It catalyses the reaction hydrogen sulfide + 3 NADP(+) + 3 H2O = sulfite + 3 NADPH + 4 H(+). Its pathway is sulfur metabolism; hydrogen sulfide biosynthesis; hydrogen sulfide from sulfite (NADPH route): step 1/1. Functionally, component of the sulfite reductase complex that catalyzes the 6-electron reduction of sulfite to sulfide. This is one of several activities required for the biosynthesis of L-cysteine from sulfate. The polypeptide is Sulfite reductase [NADPH] hemoprotein beta-component (Neisseria meningitidis serogroup C (strain 053442)).